Consider the following 494-residue polypeptide: Hexokinase-2 (494 aa).

Residues glycine 32–alanine 483 form the Hexokinase domain. Positions serine 87–isoleucine 225 are hexokinase small subdomain. Glycine 101, threonine 102, and asparagine 103 together coordinate ADP. 4 residues coordinate D-glucose: threonine 191, lysine 192, asparagine 226, and aspartate 227. The interval asparagine 226–aspartate 472 is hexokinase large subdomain. Threonine 250 provides a ligand contact to ADP. Positions 253, 281, and 312 each coordinate D-glucose. Glycine 437 contacts ADP.

Belongs to the hexokinase family. As to expression, expressed in roots, leaves, flowers, immature seeds, endosperm and seed coat.

It carries out the reaction a D-hexose + ATP = a D-hexose 6-phosphate + ADP + H(+). The enzyme catalyses D-fructose + ATP = D-fructose 6-phosphate + ADP + H(+). It catalyses the reaction D-glucose + ATP = D-glucose 6-phosphate + ADP + H(+). Its pathway is carbohydrate metabolism; hexose metabolism. It functions in the pathway carbohydrate degradation; glycolysis; D-glyceraldehyde 3-phosphate and glycerone phosphate from D-glucose: step 1/4. In terms of biological role, fructose and glucose phosphorylating enzyme. This is Hexokinase-2 (HXK2) from Oryza sativa subsp. japonica (Rice).